A 687-amino-acid polypeptide reads, in one-letter code: DNA-directed RNA polymerase subunit beta' (687 aa).

Residues C69, C71, C87, and C90 each coordinate Zn(2+). Mg(2+) contacts are provided by D493, D495, and D497.

This sequence belongs to the RNA polymerase beta' chain family. RpoC1 subfamily. In terms of assembly, in plastids the minimal PEP RNA polymerase catalytic core is composed of four subunits: alpha, beta, beta', and beta''. When a (nuclear-encoded) sigma factor is associated with the core the holoenzyme is formed, which can initiate transcription. Requires Mg(2+) as cofactor. Zn(2+) is required as a cofactor.

The protein localises to the plastid. The protein resides in the chloroplast. The enzyme catalyses RNA(n) + a ribonucleoside 5'-triphosphate = RNA(n+1) + diphosphate. In terms of biological role, DNA-dependent RNA polymerase catalyzes the transcription of DNA into RNA using the four ribonucleoside triphosphates as substrates. The sequence is that of DNA-directed RNA polymerase subunit beta' from Angiopteris evecta (Mule's foot fern).